The following is a 624-amino-acid chain: Mannosyl-oligosaccharide 1,2-alpha-mannosidase MNS3 (624 aa).

Residues 1 to 43 (MSKSLPYSVKDIHYDNAKFRHRSPLKVFSQSLLTLSTKRNYAS) are Cytoplasmic-facing. Residues 44–64 (CSTGKFLILILFFGVACLMLM) form a helical; Signal-anchor for type II membrane protein membrane-spanning segment. Over 65-624 (SKSPNESGLN…AHPLPIRRNT (560 aa)) the chain is Lumenal. Asn-69 and Asn-114 each carry an N-linked (GlcNAc...) asparagine glycan. A disordered region spans residues 91-123 (LRKPPRLPPRLSPDEGQLRGSSTNGSTISNSDP). Residues 110-121 (GSSTNGSTISNS) show a composition bias toward low complexity. Glu-212 functions as the Proton donor in the catalytic mechanism. The N-linked (GlcNAc...) asparagine glycan is linked to Asn-236. Asp-357 is an active-site residue. Residue Asn-377 is glycosylated (N-linked (GlcNAc...) asparagine). Cys-428 and Cys-471 are joined by a disulfide. The active-site Proton donor is Glu-485. N-linked (GlcNAc...) asparagine glycosylation occurs at Asn-503. The active site involves Glu-526. Residue Thr-613 coordinates Ca(2+).

It belongs to the glycosyl hydrolase 47 family. Requires Ca(2+) as cofactor. Mn(2+) is required as a cofactor. Mg(2+) serves as cofactor. In terms of tissue distribution, expressed in flowers, siliques, stems, leaves, roots, stamens and sepals.

Its subcellular location is the golgi apparatus. It localises to the cis-Golgi network membrane. It catalyses the reaction N(4)-(alpha-D-Man-(1-&gt;2)-alpha-D-Man-(1-&gt;2)-alpha-D-Man-(1-&gt;3)-[alpha-D-Man-(1-&gt;2)-alpha-D-Man-(1-&gt;3)-[alpha-D-Man-(1-&gt;2)-alpha-D-Man-(1-&gt;6)]-alpha-D-Man-(1-&gt;6)]-beta-D-Man-(1-&gt;4)-beta-D-GlcNAc-(1-&gt;4)-beta-D-GlcNAc)-L-asparaginyl-[protein] (N-glucan mannose isomer 9A1,2,3B1,2,3) + 4 H2O = N(4)-(alpha-D-Man-(1-&gt;3)-[alpha-D-Man-(1-&gt;3)-[alpha-D-Man-(1-&gt;6)]-alpha-D-Man-(1-&gt;6)]-beta-D-Man-(1-&gt;4)-beta-D-GlcNAc-(1-&gt;4)-beta-D-GlcNAc)-L-asparaginyl-[protein] (N-glucan mannose isomer 5A1,2) + 4 beta-D-mannose. The enzyme catalyses N(4)-(alpha-D-Man-(1-&gt;2)-alpha-D-Man-(1-&gt;2)-alpha-D-Man-(1-&gt;3)-[alpha-D-Man-(1-&gt;3)-[alpha-D-Man-(1-&gt;2)-alpha-D-Man-(1-&gt;6)]-alpha-D-Man-(1-&gt;6)]-beta-D-Man-(1-&gt;4)-beta-D-GlcNAc-(1-&gt;4)-beta-D-GlcNAc)-L-asparaginyl-[protein] (N-glucan mannose isomer 8A1,2,3B1,3) + 3 H2O = N(4)-(alpha-D-Man-(1-&gt;3)-[alpha-D-Man-(1-&gt;3)-[alpha-D-Man-(1-&gt;6)]-alpha-D-Man-(1-&gt;6)]-beta-D-Man-(1-&gt;4)-beta-D-GlcNAc-(1-&gt;4)-beta-D-GlcNAc)-L-asparaginyl-[protein] (N-glucan mannose isomer 5A1,2) + 3 beta-D-mannose. The catalysed reaction is N(4)-(alpha-D-Man-(1-&gt;2)-alpha-D-Man-(1-&gt;2)-alpha-D-Man-(1-&gt;3)-[alpha-D-Man-(1-&gt;2)-alpha-D-Man-(1-&gt;3)-[alpha-D-Man-(1-&gt;2)-alpha-D-Man-(1-&gt;6)]-alpha-D-Man-(1-&gt;6)]-beta-D-Man-(1-&gt;4)-beta-D-GlcNAc-(1-&gt;4)-beta-D-GlcNAc)-L-asparaginyl-[protein] (N-glucan mannose isomer 9A1,2,3B1,2,3) + H2O = N(4)-(alpha-D-Man-(1-&gt;2)-alpha-D-Man-(1-&gt;2)-alpha-D-Man-(1-&gt;3)-[alpha-D-Man-(1-&gt;3)-[alpha-D-Man-(1-&gt;2)-alpha-D-Man-(1-&gt;6)]-alpha-D-Man-(1-&gt;6)]-beta-D-Man-(1-&gt;4)-beta-D-GlcNAc-(1-&gt;4)-beta-D-GlcNAc)-L-asparaginyl-[protein] (N-glucan mannose isomer 8A1,2,3B1,3) + beta-D-mannose. It functions in the pathway protein modification; protein glycosylation. Its activity is regulated as follows. Inhibited by kifunensine and 1-deoxymannojirimycin, but not by swainsonine. Functionally, class I alpha-mannosidase essential for early N-glycan processing. Removes preferentially alpha-1,2-linked mannose residues from Man(9)GlcNAc(2) to produce Man(8)GlcNAc(2). Involved in root development and cell wall biosynthesis. The chain is Mannosyl-oligosaccharide 1,2-alpha-mannosidase MNS3 (MNS3) from Arabidopsis thaliana (Mouse-ear cress).